Consider the following 529-residue polypeptide: Endoglucanase 21 (529 aa).

The N-terminal stretch at 1–24 (MVAAMTMCAAVAVLLVLTSTMAAA) is a signal peptide. The active-site Nucleophile is the Asp89. Residue Asn342 is glycosylated (N-linked (GlcNAc...) asparagine). Active-site residues include His429, Asp481, and Glu490.

This sequence belongs to the glycosyl hydrolase 9 (cellulase E) family. As to expression, expressed in roots and flowers.

The protein resides in the secreted. The catalysed reaction is Endohydrolysis of (1-&gt;4)-beta-D-glucosidic linkages in cellulose, lichenin and cereal beta-D-glucans.. The sequence is that of Endoglucanase 21 (GLU9) from Oryza sativa subsp. japonica (Rice).